The sequence spans 392 residues: 8-amino-7-oxononanoate synthase 1 (392 aa).

109 to 110 (GF) lines the pyridoxal 5'-phosphate pocket. His-134 contributes to the substrate binding site. Residues Ser-181, 206-209 (DDAH), and 237-240 (TLSK) each bind pyridoxal 5'-phosphate. At Lys-240 the chain carries N6-(pyridoxal phosphate)lysine. Thr-354 provides a ligand contact to substrate.

Belongs to the class-II pyridoxal-phosphate-dependent aminotransferase family. BioF subfamily. Homodimer. Pyridoxal 5'-phosphate is required as a cofactor.

It carries out the reaction 6-carboxyhexanoyl-[ACP] + L-alanine + H(+) = (8S)-8-amino-7-oxononanoate + holo-[ACP] + CO2. Its pathway is cofactor biosynthesis; biotin biosynthesis. In terms of biological role, catalyzes the decarboxylative condensation of pimeloyl-[acyl-carrier protein] and L-alanine to produce 8-amino-7-oxononanoate (AON), [acyl-carrier protein], and carbon dioxide. In Bacillus subtilis (strain 168), this protein is 8-amino-7-oxononanoate synthase 1 (kbl).